We begin with the raw amino-acid sequence, 616 residues long: MPKYRSATTTHGRNMAGARALWRATGMTDADFGKPIIAVVNSFTQFVPGHVHLRDLGKLVAEQIEAAGGVAKEFNTIAVDDGIAMGHGGMLYSLPSRELIADSVEYMVNAHCADAMVCISNCDKITPGMLMASLRLNIPVIFVSGGPMEAGKTKLSDKIIKLDLVDAMIQGADPKVSDEQSNQVERSACPTCGSCSGMFTANSMNCLTEALGLSQPGNGSLLATHADRKELFLNAGKRIVELTKRYYEQDDASALPRNIASKAAFENAMTLDIAMGGSTNTVLHLLAAAQEAEIDFTMSDIDKLSRKVPQLCKVAPSTQKYHMEDVHRAGGVLGILGELDRAGLLNRDVKNVLGLTLPQTLEQYDVMVTQDDAVKKMFRAGPAGIRTTQAFSQDCRWDTLDDDRAEGCIRSLEHAYSKDGGLAVLYGNFAENGCIVKTAGVDDSILKFTGPAKVYESQDEAVDAILGGKVVEGDVVVIRYEGPKGGPGMQEMLYPTTFLKSMGLGKACALITDGRFSGGTSGLSIGHVSPEAASGGNIAIIEDGDMIAIDIPNRGIQLQLSDAEIAARREAQEARGDKAWTPKDRERQVSFALRAYASLATSADKGAVRDKSKLGG.

Mg(2+) is bound at residue Asp-81. Cys-122 serves as a coordination point for [2Fe-2S] cluster. Residues Asp-123 and Lys-124 each contribute to the Mg(2+) site. Lys-124 is subject to N6-carboxylysine. Residue Cys-195 coordinates [2Fe-2S] cluster. Glu-491 is a binding site for Mg(2+). The active-site Proton acceptor is Ser-517.

Belongs to the IlvD/Edd family. Homodimer. [2Fe-2S] cluster serves as cofactor. Mg(2+) is required as a cofactor.

The enzyme catalyses (2R)-2,3-dihydroxy-3-methylbutanoate = 3-methyl-2-oxobutanoate + H2O. It catalyses the reaction (2R,3R)-2,3-dihydroxy-3-methylpentanoate = (S)-3-methyl-2-oxopentanoate + H2O. The protein operates within amino-acid biosynthesis; L-isoleucine biosynthesis; L-isoleucine from 2-oxobutanoate: step 3/4. It participates in amino-acid biosynthesis; L-valine biosynthesis; L-valine from pyruvate: step 3/4. Its function is as follows. Functions in the biosynthesis of branched-chain amino acids. Catalyzes the dehydration of (2R,3R)-2,3-dihydroxy-3-methylpentanoate (2,3-dihydroxy-3-methylvalerate) into 2-oxo-3-methylpentanoate (2-oxo-3-methylvalerate) and of (2R)-2,3-dihydroxy-3-methylbutanoate (2,3-dihydroxyisovalerate) into 2-oxo-3-methylbutanoate (2-oxoisovalerate), the penultimate precursor to L-isoleucine and L-valine, respectively. The chain is Dihydroxy-acid dehydratase from Klebsiella pneumoniae (strain 342).